A 398-amino-acid chain; its full sequence is Dihydroorotase (398 aa).

The Zn(2+) site is built by His58 and His60. Substrate contacts are provided by residues 60 to 62 (HFR) and Asn92. Zn(2+) is bound by residues Asp151, His178, and His215. Asn256 contributes to the substrate binding site. Asp283 provides a ligand contact to Zn(2+). Asp283 is a catalytic residue. Residues His287 and 297 to 298 (PG) contribute to the substrate site.

It belongs to the metallo-dependent hydrolases superfamily. DHOase family. Class I DHOase subfamily. Zn(2+) is required as a cofactor.

The catalysed reaction is (S)-dihydroorotate + H2O = N-carbamoyl-L-aspartate + H(+). It participates in pyrimidine metabolism; UMP biosynthesis via de novo pathway; (S)-dihydroorotate from bicarbonate: step 3/3. Catalyzes the reversible cyclization of carbamoyl aspartate to dihydroorotate. This Clostridium botulinum (strain Eklund 17B / Type B) protein is Dihydroorotase.